The following is a 259-amino-acid chain: Deoxyribose-phosphate aldolase (259 aa).

The Proton donor/acceptor role is filled by aspartate 102. Residue lysine 167 is the Schiff-base intermediate with acetaldehyde of the active site. Residue lysine 201 is the Proton donor/acceptor of the active site.

This sequence belongs to the DeoC/FbaB aldolase family. DeoC type 2 subfamily.

It is found in the cytoplasm. The enzyme catalyses 2-deoxy-D-ribose 5-phosphate = D-glyceraldehyde 3-phosphate + acetaldehyde. It functions in the pathway carbohydrate degradation; 2-deoxy-D-ribose 1-phosphate degradation; D-glyceraldehyde 3-phosphate and acetaldehyde from 2-deoxy-alpha-D-ribose 1-phosphate: step 2/2. In terms of biological role, catalyzes a reversible aldol reaction between acetaldehyde and D-glyceraldehyde 3-phosphate to generate 2-deoxy-D-ribose 5-phosphate. The protein is Deoxyribose-phosphate aldolase of Escherichia coli (strain SMS-3-5 / SECEC).